The following is a 128-amino-acid chain: Myelin basic protein (128 aa).

Disordered regions lie at residues 1–24 (AGGA…EPAT) and 82–128 (TDGQ…PARR). Composition is skewed to basic and acidic residues over residues 11–23 (GSRK…KEPA) and 96–107 (KSREAYRGRKDG).

Belongs to the myelin basic protein family. Post-translationally, the N-terminus is blocked.

It is found in the myelin membrane. In terms of biological role, this protein may function to maintain proper structure of myelin. The protein is Myelin basic protein (MBP) of Carcharhinus obscurus (Dusky shark).